Here is a 356-residue protein sequence, read N- to C-terminus: Solute carrier family 25 member 3 (356 aa).

Residues 1–44 (MFSSVAHLARANPFNAPHLQLVHDVSGPRSPPGPPRRSRHLAAA) constitute a mitochondrion transit peptide. Over 45 to 57 (AVEGYSCEFGSMK) the chain is Mitochondrial intermembrane. Solcar repeat units lie at residues 57–141 (KYYA…FKAL), 154–238 (WRTS…TVEA), and 255–333 (EQLV…VKVY). A helical membrane pass occupies residues 58 to 80 (YYALCGFGGVLSCGLTHTAVVPL). Topologically, residues 81 to 115 (DLVKCRMQVDPQKYKGIFNGFSITLKEDGVRGLAK) are mitochondrial matrix. Residue lysine 93 is modified to N6-acetyllysine. Residue lysine 106 is modified to N6-methyllysine. A helical membrane pass occupies residues 116-135 (GWAPTLIGYSMQGLCKFGFY). Topologically, residues 136–155 (EVFKALYSNILGEENTYLWR) are mitochondrial intermembrane. Residues 156–177 (TSLYLAASASAEFFADIALAPM) form a helical membrane-spanning segment. Residues 178–212 (EAAKVRIQTQPGYANTLREAVPKMYKEEGLNAFYK) lie on the Mitochondrial matrix side of the membrane. A Phosphotyrosine modification is found at tyrosine 190. Lysine 203 is subject to N6-acetyllysine. The chain crosses the membrane as a helical span at residues 213-232 (GVAPVWMRQIPYTMMKFACF). Residues 233–255 (ERTVEALYKFVVPKPRSECTKAE) are Mitochondrial intermembrane-facing. Residues 256–278 (QLVVTFVAGYIAGVFCAIVSHPA) traverse the membrane as a helical segment. Residues 279–308 (DSVVSVLNKEKGSTASQVLQRLGFRGVWKG) are Mitochondrial matrix-facing. Residues 309–327 (LFARIIMIGTLTALQWFIY) traverse the membrane as a helical segment. Residues 328–356 (DSVKVYFRLPRPPPPEMPESLKKKLGLTE) lie on the Mitochondrial intermembrane side of the membrane.

It belongs to the mitochondrial carrier (TC 2.A.29) family. In terms of assembly, interacts with PPIF; the interaction is impaired by CsA.

Its subcellular location is the mitochondrion inner membrane. It catalyses the reaction phosphate(in) + H(+)(in) = phosphate(out) + H(+)(out). In terms of biological role, inorganic ion transporter that transports phosphate or copper ions across the mitochondrial inner membrane into the matrix compartment. Mediates proton-coupled symport of phosphate ions necessary for mitochondrial oxidative phosphorylation of ADP to ATP. Transports copper ions probably in the form of anionic copper(I) complexes to maintain mitochondrial matrix copper pool and to supply copper for cytochrome C oxidase complex assembly. May also play a role in regulation of the mitochondrial permeability transition pore (mPTP). The polypeptide is Solute carrier family 25 member 3 (Rattus norvegicus (Rat)).